An 800-amino-acid polypeptide reads, in one-letter code: Endonuclease MutS2 (800 aa).

336–343 provides a ligand contact to ATP; the sequence is GPNTGGKT. One can recognise a Smr domain in the interval 725 to 800; it reads LDLRGVRYEA…GDGATIVELK (76 aa).

Belongs to the DNA mismatch repair MutS family. MutS2 subfamily. In terms of assembly, homodimer. Binds to stalled ribosomes, contacting rRNA.

Its function is as follows. Endonuclease that is involved in the suppression of homologous recombination and thus may have a key role in the control of bacterial genetic diversity. Functionally, acts as a ribosome collision sensor, splitting the ribosome into its 2 subunits. Detects stalled/collided 70S ribosomes which it binds and splits by an ATP-hydrolysis driven conformational change. Acts upstream of the ribosome quality control system (RQC), a ribosome-associated complex that mediates the extraction of incompletely synthesized nascent chains from stalled ribosomes and their subsequent degradation. Probably generates substrates for RQC. The sequence is that of Endonuclease MutS2 from Leuconostoc mesenteroides subsp. mesenteroides (strain ATCC 8293 / DSM 20343 / BCRC 11652 / CCM 1803 / JCM 6124 / NCDO 523 / NBRC 100496 / NCIMB 8023 / NCTC 12954 / NRRL B-1118 / 37Y).